The primary structure comprises 313 residues: Ribosomal RNA small subunit methyltransferase H (313 aa).

S-adenosyl-L-methionine-binding positions include 35–37 (GGY), D53, F80, D101, and Q108.

The protein belongs to the methyltransferase superfamily. RsmH family.

Its subcellular location is the cytoplasm. The enzyme catalyses cytidine(1402) in 16S rRNA + S-adenosyl-L-methionine = N(4)-methylcytidine(1402) in 16S rRNA + S-adenosyl-L-homocysteine + H(+). Specifically methylates the N4 position of cytidine in position 1402 (C1402) of 16S rRNA. The protein is Ribosomal RNA small subunit methyltransferase H of Acidiphilium cryptum (strain JF-5).